Reading from the N-terminus, the 212-residue chain is Root-specific lectin (212 aa).

The signal sequence occupies residues 1–26 (MKMMSTRALALGAAAVLAFAAATAHA). A Pyrrolidone carboxylic acid modification is found at Q27. 4 Chitin-binding type-1 domains span residues 27–68 (QRCG…ACYT), 69–111 (SKRC…PCRA), 112–154 (DIKC…ACST), and 155–197 (DKPC…GCDG). Disulfide bonds link C29–C44, C38–C50, C43–C57, C61–C66, C72–C87, C81–C93, C86–C100, C104–C109, C115–C130, C124–C136, C129–C143, C147–C152, C158–C173, C167–C179, C172–C186, and C190–C195. A substrate-binding site is contributed by 36 to 38 (MEC). Residue 88–99 (SQWGYCGFGAEY) coordinates substrate. 140–141 (SE) serves as a coordination point for substrate. N-linked (GlcNAc...) asparagine glycosylation occurs at N206.

As to expression, in roots.

Its function is as follows. Carbohydrate binding. The sequence is that of Root-specific lectin from Hordeum vulgare (Barley).